Here is a 208-residue protein sequence, read N- to C-terminus: MMPMDTVREYLLWNDFLRVCGIDEAGRGPLAGPVVAAAVVFPRWFSPDEGILRRLNDSKKLTPSLRRELAPAIREEAECWAVEAVDHETIDRINILRATMLAMNRAAESLPRQPDLLLIDGNRFTPNIPVPYQTIVGGDALVFSIAAASVLAKTERDRMMEEYAERYPEYGFERNAGYGTREHVEAIRRHGRSPIHRTSFRLRQLGEK.

Residues 17-208 (LRVCGIDEAG…SFRLRQLGEK (192 aa)) form the RNase H type-2 domain. 3 residues coordinate a divalent metal cation: D23, E24, and D120.

It belongs to the RNase HII family. The cofactor is Mn(2+). Requires Mg(2+) as cofactor.

Its subcellular location is the cytoplasm. The catalysed reaction is Endonucleolytic cleavage to 5'-phosphomonoester.. In terms of biological role, endonuclease that specifically degrades the RNA of RNA-DNA hybrids. This chain is Ribonuclease HII, found in Chlorobium luteolum (strain DSM 273 / BCRC 81028 / 2530) (Pelodictyon luteolum).